The following is a 434-amino-acid chain: MVNVVLGSQWGDEGKGKLVDLLVGKYDIVARAAGGNNAGHTIVVKGVKYDFHMLPSGLVNPNCQNLIGNGVVMHVPSFFAELEQLEAKGLTDARERLFISSRAHLVFDFHQRTDKLREAELSGASTDGKNIGTTGKGIGPTYATKASRSGLRVHHLVNDEPGAWEEFETKYRRLVQTRQQRYGDFEYDADAELARYKKYREELKPFVVDSVVFMHNAIRDNKKILVEGANALMLDIDFGTYPYVTSSNTGIGGVCTGLGLPPRVIDEVYGVVKAYTTRVGEGPFPTEQLNESGEKLQNIGAEFGVTTGRKRRCGWLDLVVLKYSTLINGYTSLNITKLDVLDTFKEIPVGVSYTLRGKKLDLFPEDLNVLGKVDVEYVTLPGWEQDITKITEYEDLPENAKKYLKFIEDFVGVPIEWVGTGPARESMVYKQVSK.

GTP-binding positions include 11–17 and 39–41; these read GDEGKGK and GHT. Aspartate 12 functions as the Proton acceptor in the catalytic mechanism. Residues aspartate 12 and glycine 39 each contribute to the Mg(2+) site. Residues 12 to 15, 37 to 40, threonine 134, arginine 148, asparagine 230, threonine 245, and arginine 309 each bind IMP; these read DEGK and NAGH. The active-site Proton donor is histidine 40. 305-311 serves as a coordination point for substrate; it reads VTTGRKR. GTP-binding positions include arginine 311, 337–339, and 419–421; these read KLD and GTG.

This sequence belongs to the adenylosuccinate synthetase family. Homodimer. Mg(2+) is required as a cofactor.

It is found in the cytoplasm. It carries out the reaction IMP + L-aspartate + GTP = N(6)-(1,2-dicarboxyethyl)-AMP + GDP + phosphate + 2 H(+). It participates in purine metabolism; AMP biosynthesis via de novo pathway; AMP from IMP: step 1/2. Its function is as follows. Plays an important role in the de novo pathway and in the salvage pathway of purine nucleotide biosynthesis. Catalyzes the first committed step in the biosynthesis of AMP from IMP. The chain is Adenylosuccinate synthetase from Lachancea thermotolerans (strain ATCC 56472 / CBS 6340 / NRRL Y-8284) (Yeast).